We begin with the raw amino-acid sequence, 383 residues long: Phosphoenolpyruvate/phosphate translocator 2, chloroplastic (383 aa).

The transit peptide at 1-55 directs the protein to the chloroplast; that stretch reads MFALTFLNPNPRLPSPLFLAKSTPESALSRRSRAFSSSNSYPWRPNLRFNGFKLK. 8 consecutive transmembrane segments (helical) span residues 76–96, 108–128, 143–163, 179–199, 210–232, 253–273, 299–319, and 350–369; these read GLKL…YNIF, ATVT…MWLL, VIVQ…VSLG, FFTV…WIVC, LASF…SNVT, INLF…LAIL, IMSL…YMIL, and VSPL…YLYS. The region spanning 93-212 is the EamA domain; that stretch reads YNIFNKQVLR…PIVAGVSLAS (120 aa).

It belongs to the TPT transporter family. PPT (TC 2.A.7.9) subfamily. As to expression, widely expressed in leaves throughout development. In flowers, expressed in sepals and pistils.

It is found in the plastid. The protein resides in the chloroplast membrane. Its function is as follows. Phosphoenolpyruvate/phosphate translocator that transports phosphoenolpyruvate (PEP), 2-phosphoglycerate and 3-phosphoglycerate. The polypeptide is Phosphoenolpyruvate/phosphate translocator 2, chloroplastic (PPT2) (Arabidopsis thaliana (Mouse-ear cress)).